The sequence spans 296 residues: Protoheme IX farnesyltransferase (296 aa).

A run of 9 helical transmembrane segments spans residues 11 to 31 (PGII…AAQG), 35 to 55 (YPLF…GCVF), 84 to 104 (VTLV…YVAA), 107 to 127 (LAMW…SLYM), 132 to 152 (VYGT…GYCA), 162 to 182 (LILL…IAIF), 208 to 228 (ITLY…GGYA), 229 to 249 (GYKY…MALS), and 264 to 284 (LFVF…VDSM).

This sequence belongs to the UbiA prenyltransferase family. Protoheme IX farnesyltransferase subfamily.

It is found in the cell inner membrane. The catalysed reaction is heme b + (2E,6E)-farnesyl diphosphate + H2O = Fe(II)-heme o + diphosphate. The protein operates within porphyrin-containing compound metabolism; heme O biosynthesis; heme O from protoheme: step 1/1. Its function is as follows. Converts heme B (protoheme IX) to heme O by substitution of the vinyl group on carbon 2 of heme B porphyrin ring with a hydroxyethyl farnesyl side group. The chain is Protoheme IX farnesyltransferase from Pectobacterium atrosepticum (strain SCRI 1043 / ATCC BAA-672) (Erwinia carotovora subsp. atroseptica).